The primary structure comprises 611 residues: V-type proton ATPase catalytic subunit A (611 aa).

ATP is bound at residue 244–251; the sequence is GAFGCGKT.

This sequence belongs to the ATPase alpha/beta chains family. V-ATPase is a heteromultimeric enzyme made up of two complexes: the ATP-hydrolytic V1 complex and the proton translocation V0 complex. The V1 complex consists of three catalytic AB heterodimers that form a heterohexamer, three peripheral stalks each consisting of EG heterodimers, one central rotor including subunits D and F, and the regulatory subunits C and H. The proton translocation complex V0 consists of the proton transport subunit a, a ring of proteolipid subunits c9c'', rotary subunit d and subunit e.

The protein localises to the cell membrane. It localises to the vacuole. It is found in the vesicle. The catalysed reaction is ATP + H2O + 4 H(+)(in) = ADP + phosphate + 5 H(+)(out). ATP hydrolysis occurs at the interface between the nucleotide-binding domains of subunits A and B. ATP hydrolysis triggers a conformational change in the subunits D and F, which induces a shift of subunit d. The c-ring is subsequently rotated and results in a continuous proton translocation across the membrane. Functionally, catalytic subunit of the V1 complex of vacuolar(H+)-ATPase (V-ATPase), a multisubunit enzyme composed of a peripheral complex (V1) that hydrolyzes ATP and a membrane integral complex (V0) that translocates protons. V-ATPase is responsible for acidifying and maintaining the pH of intracellular compartments and in some cell types, is targeted to the plasma membrane, where it is responsible for acidifying the extracellular environment. During the trophozoite stage, involved in the acidification of the extracellular space next to the cell membrane. This is V-type proton ATPase catalytic subunit A from Plasmodium falciparum (isolate 3D7).